Consider the following 862-residue polypeptide: Taxadiene synthase (862 aa).

The tract at residues 45-66 (RVKMSRGSGGPGPVVMMSSSTG) is disordered. Mg(2+)-binding residues include D613, D617, N757, T761, and E765. Positions 613-617 (DDMAD) match the DDXXD motif motif.

It belongs to the terpene synthase family. It depends on Mg(2+) as a cofactor.

The catalysed reaction is (2E,6E,10E)-geranylgeranyl diphosphate = taxa-4(5),11(12)-diene + diphosphate. It functions in the pathway alkaloid biosynthesis; taxol biosynthesis; taxa-4(20),11-dien-5alpha-ol from geranylgeranyl diphosphate: step 1/2. Catalyzes the cyclization of the ubiquitous isoprenoid intermediate geranylgeranyl diphosphate to taxa-4,11-diene, the parent olefin with a taxane skeleton. This chain is Taxadiene synthase (TDC1), found in Taxus chinensis (Chinese yew).